Consider the following 359-residue polypeptide: NAC transcription factor 47 (359 aa).

In terms of domain architecture, NAC spans 10–186; the sequence is LPPGFRFHPT…DWVLCRIYKK (177 aa). A DNA-binding region spans residues 112 to 192; it reads IGIKKALVFY…IYKKSHASLS (81 aa). Disordered stretches follow at residues 147-166 and 200-226; these read KRIN…FGDR and TSNQ…LQND. The span at 148 to 165 shows a compositional bias: polar residues; that stretch reads RINSSRSGGSEVNNNFGD.

It localises to the nucleus. Transcription factor that binds to the promoter of ACO5, an ACC oxidase involved in ethylene biosynthesis. Mediates waterlogging-induced hyponastic leaf movement, and cell expansion in abaxial cells of the basal petiole region, by directly regulating the expression of ACO5. Required for normal seed development and morphology. The protein is NAC transcription factor 47 of Arabidopsis thaliana (Mouse-ear cress).